We begin with the raw amino-acid sequence, 358 residues long: Mesaconyl-CoA hydratase (358 aa).

It belongs to the enoyl-CoA hydratase/isomerase family. As to quaternary structure, homodimer.

It catalyses the reaction (2R,3S)-beta-methylmalyl-CoA = 2-methylfumaryl-CoA + H2O. With respect to regulation, shows highest activity at 0.5 M KCl. Does not require divalent ions for activity. Its function is as follows. Involved in the methylaspartate cycle. Catalyzes the reversible hydration of mesaconyl-CoA (2-methylfumaryl-CoA) to yield beta-methylmalyl-CoA ((2R,3S)-beta-methylmalyl-CoA). Also shows activity with mesaconyl-C4-CoA (3-methylfumaryl-CoA), (S)-citramalyl-CoA and (S)-malyl-CoA. This chain is Mesaconyl-CoA hydratase, found in Haloarcula hispanica (strain ATCC 33960 / DSM 4426 / JCM 8911 / NBRC 102182 / NCIMB 2187 / VKM B-1755).